The sequence spans 604 residues: Serine/threonine-protein phosphatase 2B catalytic subunit A2 (604 aa).

Residues 21–48 form a disordered region; that stretch reads NKTERPQSSTTPIDSKASTVAAANSTAT. Thr31 carries the post-translational modification Phosphothreonine. Over residues 35–48 the composition is skewed to low complexity; sequence SKASTVAAANSTAT. Fe cation contacts are provided by Asp144, His146, and Asp172. The Zn(2+) site is built by Asp172 and Asn204. His205 (proton donor) is an active-site residue. Zn(2+) contacts are provided by His253 and His359. The segment at 470-497 is disordered; the sequence is KKLPQAGKSEATPQPATSASPKHASILD. Residues 480–489 are compositionally biased toward polar residues; it reads ATPQPATSAS. Phosphoserine is present on residues Ser489 and Ser520. Residues 501 to 523 form a calmodulin-binding region; it reads RRKALRNKILAVAKVSRMYSVLR.

This sequence belongs to the PPP phosphatase family. PP-2B subfamily. As to quaternary structure, composed of two components (A and B), the A component is the catalytic subunit and the B component confers calcium sensitivity. Requires Fe(3+) as cofactor. The cofactor is Zn(2+).

It carries out the reaction O-phospho-L-seryl-[protein] + H2O = L-seryl-[protein] + phosphate. The catalysed reaction is O-phospho-L-threonyl-[protein] + H2O = L-threonyl-[protein] + phosphate. Functionally, calcium-dependent, calmodulin-stimulated protein phosphatase. This subunit may have a role in the calmodulin activation of calcineurin. This Saccharomyces cerevisiae (strain ATCC 204508 / S288c) (Baker's yeast) protein is Serine/threonine-protein phosphatase 2B catalytic subunit A2 (CMP2).